The sequence spans 342 residues: Farnesyl pyrophosphate synthase 2 (342 aa).

3 residues coordinate isopentenyl diphosphate: K47, R50, and Q86. Mg(2+) contacts are provided by D93 and D97. R102 contributes to the dimethylallyl diphosphate binding site. Isopentenyl diphosphate is bound at residue R103. 5 residues coordinate dimethylallyl diphosphate: K190, T191, Q229, K246, and K255.

Belongs to the FPP/GGPP synthase family. Mg(2+) serves as cofactor.

It is found in the cytoplasm. It carries out the reaction isopentenyl diphosphate + dimethylallyl diphosphate = (2E)-geranyl diphosphate + diphosphate. It catalyses the reaction isopentenyl diphosphate + (2E)-geranyl diphosphate = (2E,6E)-farnesyl diphosphate + diphosphate. The protein operates within isoprenoid biosynthesis; farnesyl diphosphate biosynthesis; farnesyl diphosphate from geranyl diphosphate and isopentenyl diphosphate: step 1/1. Its pathway is isoprenoid biosynthesis; geranyl diphosphate biosynthesis; geranyl diphosphate from dimethylallyl diphosphate and isopentenyl diphosphate: step 1/1. Its function is as follows. Catalyzes the sequential condensation of isopentenyl pyrophosphate with the allylic pyrophosphates, dimethylallyl pyrophosphate, and then with the resultant geranylpyrophosphate to the ultimate product farnesyl pyrophosphate. This Arabidopsis thaliana (Mouse-ear cress) protein is Farnesyl pyrophosphate synthase 2 (FPS2).